The primary structure comprises 528 residues: Peptide chain release factor 3 (528 aa).

A tr-type G domain is found at Asp-10–His-278. Residues Ser-19–Thr-26, Asp-87–His-91, and Asn-141–Asp-144 each bind GTP.

Belongs to the TRAFAC class translation factor GTPase superfamily. Classic translation factor GTPase family. PrfC subfamily.

Its subcellular location is the cytoplasm. Functionally, increases the formation of ribosomal termination complexes and stimulates activities of RF-1 and RF-2. It binds guanine nucleotides and has strong preference for UGA stop codons. It may interact directly with the ribosome. The stimulation of RF-1 and RF-2 is significantly reduced by GTP and GDP, but not by GMP. In Syntrophobacter fumaroxidans (strain DSM 10017 / MPOB), this protein is Peptide chain release factor 3.